A 216-amino-acid chain; its full sequence is Guanylate kinase (216 aa).

Positions 11–189 (GVLIVISGPS…AVKKIEAILL (179 aa)) constitute a Guanylate kinase-like domain. Position 18-25 (18-25 (GPSGAGKG)) interacts with ATP.

This sequence belongs to the guanylate kinase family.

The protein localises to the cytoplasm. It catalyses the reaction GMP + ATP = GDP + ADP. In terms of biological role, essential for recycling GMP and indirectly, cGMP. The chain is Guanylate kinase from Clostridium perfringens (strain SM101 / Type A).